The following is a 61-amino-acid chain: Rubredoxin 3 (61 aa).

The region spanning 1 to 53 (MSSYRCPVCEYVYDESKGAPREGFPAGTPWDAVPDDWCCPDCGVREKLDFEPM) is the Rubredoxin-like domain. C6, C9, C39, and C42 together coordinate Fe cation.

Belongs to the rubredoxin family. The cofactor is Fe(3+).

In terms of biological role, involved in the hydrocarbon hydroxylating system, which transfers electrons from NADH to rubredoxin reductase and then through rubredoxin to alkane 1 monooxygenase. The chain is Rubredoxin 3 (rubA3) from Rhodococcus erythropolis (Arthrobacter picolinophilus).